Here is a 409-residue protein sequence, read N- to C-terminus: N-acetylglucosamine-6-phosphate deacetylase (409 aa).

Glutamate 143 contacts a divalent metal cation. Residue 154-155 (AH) participates in substrate binding. Histidine 211 and histidine 232 together coordinate a divalent metal cation. Residues 235–236 (NA), arginine 243, and 269–272 (DGIH) each bind substrate. Residue aspartate 294 is the Proton donor/acceptor of the active site. Position 328-330 (328-330 (LGG)) interacts with substrate.

It belongs to the metallo-dependent hydrolases superfamily. NagA family. Requires a divalent metal cation as cofactor.

It carries out the reaction N-acetyl-D-glucosamine 6-phosphate + H2O = D-glucosamine 6-phosphate + acetate. The protein operates within amino-sugar metabolism; N-acetylneuraminate degradation. Hydrolyzes the N-glycolyl group from N-glycolylglucosamine 6-phosphate (GlcNGc-6-P) in the N-glycolylneuraminic acid (Neu5Gc) degradation pathway. The chain is N-acetylglucosamine-6-phosphate deacetylase (Amdhd2) from Mus musculus (Mouse).